Consider the following 515-residue polypeptide: 2-isopropylmalate synthase (515 aa).

The Pyruvate carboxyltransferase domain occupies 5–267; it reads VIIFDTTLRD…HTNLKHDEIH (263 aa). 4 residues coordinate Mn(2+): D14, H202, H204, and N238. Residues 392–515 are regulatory domain; sequence KLNYLSVQSG…EIKQKKVETV (124 aa).

Belongs to the alpha-IPM synthase/homocitrate synthase family. LeuA type 1 subfamily. Homodimer. Requires Mn(2+) as cofactor.

The protein resides in the cytoplasm. It catalyses the reaction 3-methyl-2-oxobutanoate + acetyl-CoA + H2O = (2S)-2-isopropylmalate + CoA + H(+). It participates in amino-acid biosynthesis; L-leucine biosynthesis; L-leucine from 3-methyl-2-oxobutanoate: step 1/4. Catalyzes the condensation of the acetyl group of acetyl-CoA with 3-methyl-2-oxobutanoate (2-ketoisovalerate) to form 3-carboxy-3-hydroxy-4-methylpentanoate (2-isopropylmalate). This Aliivibrio fischeri (strain MJ11) (Vibrio fischeri) protein is 2-isopropylmalate synthase.